Consider the following 526-residue polypeptide: Nitrogenase iron-iron protein alpha chain (526 aa).

Residues Cys49, Cys75, and Cys138 each contribute to the [8Fe-7S] cluster site. Positions 257 and 423 each coordinate [8Fe-9S-C-homocitryl] cluster. Residues 507–526 (RNQPMPPSRKLRDAVQPAAE) form a disordered region.

It belongs to the NifD/NifK/NifE/NifN family. As to quaternary structure, hexamer of two alpha, two beta, and two delta chains. The cofactor is [8Fe-7S] cluster. [8Fe-9S-C-homocitryl] cluster is required as a cofactor.

It carries out the reaction N2 + 8 reduced [2Fe-2S]-[ferredoxin] + 16 ATP + 16 H2O = H2 + 8 oxidized [2Fe-2S]-[ferredoxin] + 2 NH4(+) + 16 ADP + 16 phosphate + 6 H(+). Functionally, this iron-iron protein is part of the nitrogenase complex that catalyzes the key enzymatic reactions in nitrogen fixation. Other nitrogenase complexes utilize a molybdenum-iron protein or a vanadium-iron protein. In Rhodobacter capsulatus (Rhodopseudomonas capsulata), this protein is Nitrogenase iron-iron protein alpha chain (anfD).